The following is a 372-amino-acid chain: MKYDLIIIGSGSVGAAAGYYATRAGLKVLMTDAHMPPHQQGSHHGDTRLIRHAYGEGEKYVPLVLRAQTLWDELSTHNEEPIFVRSGVVNLGPADSAFLANVARSAQQWQLNVERLDATALMTRWPEIRVPDNYIGLFEADSGFLRSELAITTWLRLAREAGCAQLFNSPVSHIHHDDNGVTIETSEGSYHASKALISAGTWVKALVPELPVQPVRKVFAWFKADGRYSTKNRFPAFTGEMPNGDQYYGFPAENDELKIGKHNGGQLIQAPEERKPFAAVASDGAEAFPFLRNVLPGIGGCLHGAACTYDNSPDEDFIIDTLPGHENTLVITGLSGHGFKFAPVLGEIAADFALGKTPSFDLTPFRLSRFSQ.

4-34 (DLIIIGSGSVGAAAGYYATRAGLKVLMTDAH) is an FAD binding site. Cys307 is subject to S-8alpha-FAD cysteine.

This sequence belongs to the MSOX/MTOX family. MTOX subfamily. As to quaternary structure, monomer. Requires FAD as cofactor.

The catalysed reaction is N(alpha)-methyl-L-tryptophan + O2 + H2O = L-tryptophan + formaldehyde + H2O2. In terms of biological role, catalyzes the oxidative demethylation of N-methyl-L-tryptophan. The protein is N-methyl-L-tryptophan oxidase of Salmonella agona (strain SL483).